The primary structure comprises 500 residues: MNDFPWLTLIVIFPISAGSFLFFLPHRGNKVTKWYTLCVCSLELLLTTYTFCYHFQLDDPLIQLVEDSKWIFFFHFDWRLGIDGLSFGPILLTGFITTLATLAAWPVTRDSRLFHFMMLAMYSGQIGSFSSQDLLLFFMMWELELIPVYLLLSMWGGKKRLYSATKFILYTAGSSIFLLIGVLGIGLYGSNEPTFNFEISAHRSYPAALEIIFYIGFLIAFAVKSPIIPLHTWLPDTHGEAHYSTCMLLAGILLKMGAYGLVRINMELLPHAHSIFAPYLIIVGAIQIVYAASTSLGQRNLKKRIAYSSVSHMGFIIIGIGSITDAGLSGALLQIISHGFIGAALFFLAGTSYDRIRLGFFDEMGGMAVAIPKIFTMFSILSMASLALPGMSGFVAELIVFFGIITSQKFLLMPKILITFVMAIGMILTPIYSLSMLRQMFYGYRLFNAPNPSFFDSGPRELFVSISILLPVIGMGIYPDFLLSLSVDKVELIVSQFFYR.

The next 14 helical transmembrane spans lie at 4 to 24, 35 to 55, 87 to 107, 134 to 154, 167 to 187, 208 to 228, 242 to 262, 272 to 292, 305 to 325, 330 to 350, 364 to 384, 386 to 406, 416 to 436, and 462 to 482; these read FPWLTLIVIFPISAGSFLFFL, YTLCVCSLELLLTTYTFCYHF, FGPILLTGFITTLATLAAWPV, LLLFFMMWELELIPVYLLLSM, FILYTAGSSIFLLIGVLGIGL, ALEIIFYIGFLIAFAVKSPII, HYSTCMLLAGILLKMGAYGLV, AHSIFAPYLIIVGAIQIVYAA, IAYSSVSHMGFIIIGIGSITD, GALLQIISHGFIGAALFFLAG, MGGMAVAIPKIFTMFSILSMA, LALPGMSGFVAELIVFFGIIT, ILITFVMAIGMILTPIYSLSM, and LFVSISILLPVIGMGIYPDFL.

This sequence belongs to the complex I subunit 4 family.

The protein localises to the plastid. It localises to the chloroplast thylakoid membrane. The catalysed reaction is a plastoquinone + NADH + (n+1) H(+)(in) = a plastoquinol + NAD(+) + n H(+)(out). The enzyme catalyses a plastoquinone + NADPH + (n+1) H(+)(in) = a plastoquinol + NADP(+) + n H(+)(out). The sequence is that of NAD(P)H-quinone oxidoreductase chain 4, chloroplastic from Pelargonium hortorum (Common geranium).